Here is a 391-residue protein sequence, read N- to C-terminus: 5-amino-6-(D-ribitylamino)uracil--L-tyrosine 4-hydroxyphenyl transferase (391 aa).

Residues 55-302 (VTYVINRNIN…GAVARIYLGN (248 aa)) form the Radical SAM core domain. [4Fe-4S] cluster is bound by residues C69, C73, and C76.

The protein belongs to the radical SAM superfamily. CofH family. As to quaternary structure, consists of two subunits, CofG and CofH. [4Fe-4S] cluster is required as a cofactor.

It carries out the reaction 5-amino-6-(D-ribitylamino)uracil + L-tyrosine + S-adenosyl-L-methionine = 5-amino-5-(4-hydroxybenzyl)-6-(D-ribitylimino)-5,6-dihydrouracil + 2-iminoacetate + 5'-deoxyadenosine + L-methionine + H(+). The protein operates within cofactor biosynthesis; coenzyme F0 biosynthesis. Functionally, catalyzes the radical-mediated synthesis of 5-amino-5-(4-hydroxybenzyl)-6-(D-ribitylimino)-5,6-dihydrouracil from 5-amino-6-(D-ribitylamino)uracil and L-tyrosine. The sequence is that of 5-amino-6-(D-ribitylamino)uracil--L-tyrosine 4-hydroxyphenyl transferase from Nostoc sp. (strain PCC 7120 / SAG 25.82 / UTEX 2576).